The primary structure comprises 276 residues: F420-dependent methylenetetrahydromethanopterin dehydrogenase (276 aa).

Belongs to the MTD family.

The catalysed reaction is 5,10-methylenetetrahydromethanopterin + oxidized coenzyme F420-(gamma-L-Glu)(n) + 2 H(+) = 5,10-methenyl-5,6,7,8-tetrahydromethanopterin + reduced coenzyme F420-(gamma-L-Glu)(n). Functionally, catalyzes the oxidation of methylene-H(4)MPT to methenyl-H(4)MPT(+). The sequence is that of F420-dependent methylenetetrahydromethanopterin dehydrogenase from Methanosphaera stadtmanae (strain ATCC 43021 / DSM 3091 / JCM 11832 / MCB-3).